A 144-amino-acid polypeptide reads, in one-letter code: Globin-1 (144 aa).

Positions 1-141 (VSANDIKNVQ…ILHQMSSYFA (141 aa)) constitute a Globin domain. His89 contributes to the heme b binding site.

This sequence belongs to the globin family. As to quaternary structure, homodimer.

The protein is Globin-1 of Phreagena soyoae (Deep-sea cold-seep clam).